The primary structure comprises 319 residues: Cobalamin biosynthesis protein CbiB (319 aa).

4 helical membrane passes run 56–76 (VMWVVVVGVTWGVAWGVLALA), 82–102 (WFGWSVEVWMIFTTLAGRSLA), 153–173 (VDGIIAPLFFLFLGGAPLAMA), and 296–316 (LMWVASTLALALFIAARCGLS).

This sequence belongs to the CobD/CbiB family.

It is found in the cell membrane. It participates in cofactor biosynthesis; adenosylcobalamin biosynthesis. In terms of biological role, converts cobyric acid to cobinamide by the addition of aminopropanol on the F carboxylic group. However, the true cosubstrate could be (R)-1-amino-2-propanol O-2-phosphate, leading to cobinamide phosphate. This chain is Cobalamin biosynthesis protein CbiB, found in Salmonella paratyphi A (strain ATCC 9150 / SARB42).